A 78-amino-acid polypeptide reads, in one-letter code: DNA-directed RNA polymerase subunit omega (78 aa).

It belongs to the RNA polymerase subunit omega family. The RNAP catalytic core consists of 2 alpha, 1 beta, 1 beta' and 1 omega subunit. When a sigma factor is associated with the core the holoenzyme is formed, which can initiate transcription.

The catalysed reaction is RNA(n) + a ribonucleoside 5'-triphosphate = RNA(n+1) + diphosphate. Promotes RNA polymerase assembly. Latches the N- and C-terminal regions of the beta' subunit thereby facilitating its interaction with the beta and alpha subunits. In Desulfovibrio desulfuricans (strain ATCC 27774 / DSM 6949 / MB), this protein is DNA-directed RNA polymerase subunit omega.